The chain runs to 1026 residues: DNA cross-link repair 1A protein (1026 aa).

The nuclear localization region stretch occupies residues Met-1 to Pro-189. The tract at residues Glu-12 to Thr-110 is disordered. Basic and acidic residues predominate over residues Ser-34 to Cys-65. The segment covering Ser-71 to Ser-82 has biased composition (low complexity). Positions Lys-98–Lys-107 are enriched in basic residues. The UBZ4-type zinc finger occupies Asp-118 to Pro-148. Zn(2+) contacts are provided by Cys-121, Cys-124, His-139, and Cys-143. Residues Lys-359, Lys-434, and Lys-522 each participate in a glycyl lysine isopeptide (Lys-Gly) (interchain with G-Cter in SUMO2) cross-link. The segment at Ser-401–Ala-602 is nuclear focus formation. Disordered stretches follow at residues Pro-474 to Val-542, Glu-560 to Lys-590, and Ala-602 to Gly-651. Low complexity predominate over residues Ser-527–Lys-540. The segment covering Glu-569–Gln-581 has biased composition (polar residues). Phosphoserine occurs at positions 574 and 578. A compositionally biased stretch (basic residues) spans Arg-619–Thr-628. Lys-657 participates in a covalent cross-link: Glycyl lysine isopeptide (Lys-Gly) (interchain with G-Cter in SUMO2).

Belongs to the DNA repair metallo-beta-lactamase (DRMBL) family. Binds constitutively to TP53BP1. Binds CDC27, which is itself a component of the anaphase promoting complex (APC). Binds PIAS1.

Its subcellular location is the nucleus. The enzyme catalyses a beta-lactam + H2O = a substituted beta-amino acid. May be required for DNA interstrand cross-link repair. Also required for checkpoint mediated cell cycle arrest in early prophase in response to mitotic spindle poisons. The protein is DNA cross-link repair 1A protein (Dclre1a) of Mus musculus (Mouse).